A 143-amino-acid chain; its full sequence is Ribosome maturation factor RimP (143 aa).

It belongs to the RimP family.

Its subcellular location is the cytoplasm. Required for maturation of 30S ribosomal subunits. The protein is Ribosome maturation factor RimP of Nitrosomonas eutropha (strain DSM 101675 / C91 / Nm57).